A 505-amino-acid polypeptide reads, in one-letter code: MKFRIKTLPLRTERIAVVLSQDDAAELGLLPGDRVKVSYDGKSFVAEVEISQEFISSGEAGVCTFTAETCSLSEECVVEIVPFARPKSVEYIRKKLNGAKYEREEIKDIIGSISSDVLSDIEISAFILANEIVGMQNDEIQWMIEAMVEVGERVVFERGTVVDMHSIGGLPGNRFSLIAVPTVAAAGLLIPKTASRAITTASGTADTMEVLANVNLSVDEIKEITEEVGGVIAWNAPTGIAPADEKIIRVEYQLELSPKPHLMASVLSKKLGSGARFVAIDIPVGKKAKVENVDVGRGFANAMMEIGRNLNLKVATALTDGSQPLGRAIGPALEAREVLEVMERKVEGDLLEKSLGIAGILFEMTGIATNGYQHARKIFESGKTLEKFREIVAAQGGDESVKAEDVAVGDKTYTLHAAKEGYVREIDIAALNEIARTAGAPKDKGAGVYVHKKRGEVVKVGDPLLTIYAEKEWKLDNAIEVANTKQAFEISGVIIERYTMGRWWS.

AMP-binding positions include Gly169, 195–200 (SRAITT), Thr204, Ser265, and Lys289.

The protein belongs to the thymidine/pyrimidine-nucleoside phosphorylase family. Type 2 subfamily.

It catalyses the reaction AMP + phosphate = alpha-D-ribose 1,5-bisphosphate + adenine. It carries out the reaction CMP + phosphate = cytosine + alpha-D-ribose 1,5-bisphosphate. The enzyme catalyses UMP + phosphate = alpha-D-ribose 1,5-bisphosphate + uracil. Functionally, catalyzes the conversion of AMP and phosphate to adenine and ribose 1,5-bisphosphate (R15P). Exhibits phosphorylase activity toward CMP and UMP in addition to AMP. Functions in an archaeal AMP degradation pathway, together with R15P isomerase and RubisCO. The polypeptide is AMP phosphorylase 2 (Archaeoglobus fulgidus (strain ATCC 49558 / DSM 4304 / JCM 9628 / NBRC 100126 / VC-16)).